A 91-amino-acid polypeptide reads, in one-letter code: uncharacterized protein (91 aa).

The signal sequence occupies residues 1–21 (MKQLLASPSLQLVTYPASATA).

It belongs to the BhsA/McbA family.

It localises to the periplasm. This is an uncharacterized protein from Escherichia coli O157:H7.